The sequence spans 897 residues: Interleukin enhancer-binding factor 3-A (897 aa).

Positions 5–379 (RIFLNDDRHV…PLKRPIEEDG (375 aa)) constitute a DZF domain. Disordered regions lie at residues 52-85 (QEKD…GENP), 364-403 (TTYA…PPQV), and 466-502 (MGLP…EVDS). Basic and acidic residues-rich tracts occupy residues 72–81 (EEGKDSEMKT) and 373–384 (RPIEEDGDDKSP). A Bipartite nuclear localization signal motif is present at residues 372 to 390 (KRPIEEDGDDKSPSKKKKK). DRBM domains are found at residues 399–468 (EPPQ…DMGL) and 521–587 (HGKN…KLFP). Disordered stretches follow at residues 627–650 (PPPQ…GRGG) and 708–797 (GDSY…AQGA). Gly residues predominate over residues 637–650 (RGGMNRGRGRGRGG). Positions 714 to 747 (PTPPKPFVNKKPPPPQQQQQQQPPPQHASNPPKP) are enriched in pro residues. Over residues 749-794 (YNQGYQGHQGGQQQQQQQQQQQTYNQNQYSNYGPPQKQKGGYNQGA) the composition is skewed to low complexity.

In terms of assembly, a component of a ybx2/frgy2-containing mRNA-ribonucleoprotein (mRNP) complex. Also a component of the CCAAT box transcription factor (CBTF) complex. Phosphorylated. Phosphorylation affects nuclear translocation. Post-translationally, methylated by protein arginine N-methyltransferase 1 (prmt1b) in the RGG-rich domain. Methylation decreases DNA-binding and thereby decreases transcription of the gata2 gene, but does not regulate dsRNA binding or subcellular localization. In terms of tissue distribution, expressed mainly in the ectoderm (at protein level).

It localises to the nucleus. The protein resides in the cytoplasm. RNA-binding protein that plays an essential role in the biogenesis of circular RNAs (circRNAs) which are produced by back-splicing circularization of pre-mRNAs. Within the nucleus, promotes circRNAs processing by stabilizing the regulatory elements residing in the flanking introns of the circularized exons. Plays thereby a role in the back-splicing of a subset of circRNAs. As a consequence, participates in a wide range of transcriptional and post-transcriptional processes. Binds to poly-U elements and AU-rich elements (AREs) in the 3'-UTR of target mRNAs. Upon viral infection, ILF3 accumulates in the cytoplasm and participates in the innate antiviral response. Mechanistically, ILF3 becomes phosphorylated and activated by the double-stranded RNA-activated protein kinase/PKR which releases ILF3 from cellular mature circRNAs. In turn, unbound ILF3 molecules are able to interact with and thus inhibit viral mRNAs. Has a cytoplasmic role early in development as part of a ribonucleoprotein (mRNP) complex which may regulate mRNA transport and/or translation. Following nuclear localization at the mid-blastula transition, acts as a transcription factor and binds the 5'-CCAAT-3' promoter sequence to regulate transcription of the gata2 gene as a subunit of the CCAAT box transcription factor (CBTF). Its role as an mRNP component negatively regulates its activity as a transcription factor by precluding its nuclear localization. This chain is Interleukin enhancer-binding factor 3-A (ilf3-a), found in Xenopus laevis (African clawed frog).